Here is a 366-residue protein sequence, read N- to C-terminus: Aminomethyltransferase (366 aa).

This sequence belongs to the GcvT family. As to quaternary structure, the glycine cleavage system is composed of four proteins: P, T, L and H.

The catalysed reaction is N(6)-[(R)-S(8)-aminomethyldihydrolipoyl]-L-lysyl-[protein] + (6S)-5,6,7,8-tetrahydrofolate = N(6)-[(R)-dihydrolipoyl]-L-lysyl-[protein] + (6R)-5,10-methylene-5,6,7,8-tetrahydrofolate + NH4(+). In terms of biological role, the glycine cleavage system catalyzes the degradation of glycine. This Moorella thermoacetica (strain ATCC 39073 / JCM 9320) protein is Aminomethyltransferase.